A 300-amino-acid chain; its full sequence is Putative 1-phosphofructokinase (300 aa).

ATP contacts are provided by residues S214–G219 and G246–D247. The active-site Proton acceptor is D247.

Belongs to the carbohydrate kinase PfkB family.

The catalysed reaction is beta-D-fructose 1-phosphate + ATP = beta-D-fructose 1,6-bisphosphate + ADP + H(+). In terms of biological role, catalyzes the ATP-dependent phosphorylation of fructose-l-phosphate to fructose-l,6-bisphosphate. The sequence is that of Putative 1-phosphofructokinase (fruK) from Mycoplasma pneumoniae (strain ATCC 29342 / M129 / Subtype 1) (Mycoplasmoides pneumoniae).